The following is a 297-amino-acid chain: Large ribosomal subunit protein uL24m (297 aa).

The residue at position 2 (S2) is an N-acetylserine. Positions 63–96 (FIPGDRVVVMSGASKGNIAVIKSFDKRTNSFILD) constitute a KOW domain.

It belongs to the universal ribosomal protein uL24 family. As to quaternary structure, component of the mitochondrial large ribosomal subunit (mt-LSU). Mature yeast 74S mitochondrial ribosomes consist of a small (37S) and a large (54S) subunit. The 37S small subunit contains a 15S ribosomal RNA (15S mt-rRNA) and 34 different proteins. The 54S large subunit contains a 21S rRNA (21S mt-rRNA) and 46 different proteins. uL24m forms the wall of the exit tunnel.

It localises to the mitochondrion. Component of the mitochondrial ribosome (mitoribosome), a dedicated translation machinery responsible for the synthesis of mitochondrial genome-encoded proteins, including at least some of the essential transmembrane subunits of the mitochondrial respiratory chain. The mitoribosomes are attached to the mitochondrial inner membrane and translation products are cotranslationally integrated into the membrane. This Saccharomyces cerevisiae (strain ATCC 204508 / S288c) (Baker's yeast) protein is Large ribosomal subunit protein uL24m (MRPL40).